The following is a 543-amino-acid chain: CTP synthase (543 aa).

The amidoligase domain stretch occupies residues 1–266 (MKTNYIFVTG…DDYICERFSL (266 aa)). Ser-14 provides a ligand contact to CTP. Ser-14 serves as a coordination point for UTP. ATP contacts are provided by residues 15-20 (SLGKGI) and Asp-72. Mg(2+)-binding residues include Asp-72 and Glu-140. Residues 147–149 (DIE), 187–192 (KTKPTQ), and Lys-223 each bind CTP. Residues 187–192 (KTKPTQ) and Lys-223 each bind UTP. Position 239-241 (239-241 (KDV)) interacts with ATP. Residues 291-538 (TVGIVGKYID…IKAASEYQKK (248 aa)) form the Glutamine amidotransferase type-1 domain. An L-glutamine-binding site is contributed by Gly-352. The Nucleophile; for glutamine hydrolysis role is filled by Cys-379. Residues 380 to 383 (LGMQ), Glu-403, and Arg-466 each bind L-glutamine. Catalysis depends on residues His-511 and Glu-513.

This sequence belongs to the CTP synthase family. In terms of assembly, homotetramer.

It catalyses the reaction UTP + L-glutamine + ATP + H2O = CTP + L-glutamate + ADP + phosphate + 2 H(+). The catalysed reaction is L-glutamine + H2O = L-glutamate + NH4(+). The enzyme catalyses UTP + NH4(+) + ATP = CTP + ADP + phosphate + 2 H(+). The protein operates within pyrimidine metabolism; CTP biosynthesis via de novo pathway; CTP from UDP: step 2/2. Allosterically activated by GTP, when glutamine is the substrate; GTP has no effect on the reaction when ammonia is the substrate. The allosteric effector GTP functions by stabilizing the protein conformation that binds the tetrahedral intermediate(s) formed during glutamine hydrolysis. Inhibited by the product CTP, via allosteric rather than competitive inhibition. In terms of biological role, catalyzes the ATP-dependent amination of UTP to CTP with either L-glutamine or ammonia as the source of nitrogen. Regulates intracellular CTP levels through interactions with the four ribonucleotide triphosphates. The chain is CTP synthase from Baumannia cicadellinicola subsp. Homalodisca coagulata.